A 418-amino-acid chain; its full sequence is Trimethyllysine dioxygenase, mitochondrial (418 aa).

Residues H239, D241, and H386 each contribute to the Fe cation site.

It belongs to the gamma-BBH/TMLD family. As to quaternary structure, homodimer. The cofactor is Fe(2+). It depends on L-ascorbate as a cofactor.

Its subcellular location is the mitochondrion matrix. It carries out the reaction N(6),N(6),N(6)-trimethyl-L-lysine + 2-oxoglutarate + O2 = (3S)-3-hydroxy-N(6),N(6),N(6)-trimethyl-L-lysine + succinate + CO2. The protein operates within amine and polyamine biosynthesis; carnitine biosynthesis. Its function is as follows. Converts trimethyllysine (TML) into hydroxytrimethyllysine (HTML). The protein is Trimethyllysine dioxygenase, mitochondrial (TMLHE) of Gallus gallus (Chicken).